Consider the following 158-residue polypeptide: NAD(P)H-quinone oxidoreductase subunit J, chloroplastic (158 aa).

It belongs to the complex I 30 kDa subunit family. In terms of assembly, NDH is composed of at least 16 different subunits, 5 of which are encoded in the nucleus.

The protein localises to the plastid. It localises to the chloroplast thylakoid membrane. The catalysed reaction is a plastoquinone + NADH + (n+1) H(+)(in) = a plastoquinol + NAD(+) + n H(+)(out). The enzyme catalyses a plastoquinone + NADPH + (n+1) H(+)(in) = a plastoquinol + NADP(+) + n H(+)(out). NDH shuttles electrons from NAD(P)H:plastoquinone, via FMN and iron-sulfur (Fe-S) centers, to quinones in the photosynthetic chain and possibly in a chloroplast respiratory chain. The immediate electron acceptor for the enzyme in this species is believed to be plastoquinone. Couples the redox reaction to proton translocation, and thus conserves the redox energy in a proton gradient. This is NAD(P)H-quinone oxidoreductase subunit J, chloroplastic from Nuphar advena (Common spatterdock).